Reading from the N-terminus, the 876-residue chain is Phosphoenolpyruvate carboxylase (876 aa).

Residues histidine 138 and lysine 543 contribute to the active site.

The protein belongs to the PEPCase type 1 family. Mg(2+) serves as cofactor.

The catalysed reaction is oxaloacetate + phosphate = phosphoenolpyruvate + hydrogencarbonate. Its function is as follows. Forms oxaloacetate, a four-carbon dicarboxylic acid source for the tricarboxylic acid cycle. The polypeptide is Phosphoenolpyruvate carboxylase (Pseudomonas fluorescens (strain ATCC BAA-477 / NRRL B-23932 / Pf-5)).